The following is a 101-amino-acid chain: Small ribosomal subunit protein uS14 (101 aa).

Belongs to the universal ribosomal protein uS14 family. In terms of assembly, part of the 30S ribosomal subunit. Contacts proteins S3 and S10.

In terms of biological role, binds 16S rRNA, required for the assembly of 30S particles and may also be responsible for determining the conformation of the 16S rRNA at the A site. This Actinobacillus pleuropneumoniae serotype 5b (strain L20) protein is Small ribosomal subunit protein uS14.